A 90-amino-acid polypeptide reads, in one-letter code: Small ribosomal subunit protein uS15 (90 aa).

This sequence belongs to the universal ribosomal protein uS15 family. As to quaternary structure, part of the 30S ribosomal subunit. Forms a bridge to the 50S subunit in the 70S ribosome, contacting the 23S rRNA.

Its function is as follows. One of the primary rRNA binding proteins, it binds directly to 16S rRNA where it helps nucleate assembly of the platform of the 30S subunit by binding and bridging several RNA helices of the 16S rRNA. In terms of biological role, forms an intersubunit bridge (bridge B4) with the 23S rRNA of the 50S subunit in the ribosome. The protein is Small ribosomal subunit protein uS15 of Paraburkholderia xenovorans (strain LB400).